A 991-amino-acid chain; its full sequence is Translation initiation factor IF-2 (991 aa).

Disordered stretches follow at residues 58-82 and 106-405; these read EGKK…GRSR and QARA…PAPQ. Positions 106–164 are enriched in low complexity; sequence QARADAAASDAAPAEPAPAAAEPSASAPVTAPVNAPAADAPQAPATAAPDTAAPAAETP. Positions 165–175 are enriched in pro residues; that stretch reads SQPPAVEPQPA. Composition is skewed to low complexity over residues 190-206, 221-258, and 267-276; these read AKPA…AAVE, AVQA…ASKP, and APVPVAAPAV. A compositionally biased stretch (basic and acidic residues) spans 279-289; the sequence is AGREEARRAAE. Residues 379 to 388 show a composition bias toward gly residues; it reads RAGGKGGKGG. The segment covering 395–405 has biased composition (basic and acidic residues); the sequence is QAERRHEPAPQ. The region spanning 492 to 659 is the tr-type G domain; the sequence is PRAPVVTVMG…NVLLQAEILE (168 aa). The interval 501–508 is G1; that stretch reads GHVDHGKT. GTP is bound at residue 501–508; sequence GHVDHGKT. The G2 stretch occupies residues 526 to 530; the sequence is GITQH. Residues 547 to 550 are G3; it reads DTPG. Residues 547–551 and 601–604 contribute to the GTP site; these read DTPGH and NKID. The G4 stretch occupies residues 601-604; that stretch reads NKID. Residues 637-639 form a G5 region; that stretch reads SAK.

Belongs to the TRAFAC class translation factor GTPase superfamily. Classic translation factor GTPase family. IF-2 subfamily.

It localises to the cytoplasm. One of the essential components for the initiation of protein synthesis. Protects formylmethionyl-tRNA from spontaneous hydrolysis and promotes its binding to the 30S ribosomal subunits. Also involved in the hydrolysis of GTP during the formation of the 70S ribosomal complex. This is Translation initiation factor IF-2 from Bordetella petrii (strain ATCC BAA-461 / DSM 12804 / CCUG 43448).